The sequence spans 322 residues: Thioredoxin reductase (322 aa).

Residues 12 to 15 (SGPA), 34 to 42 (EGAVTAGGA), asparagine 51, and valine 84 each bind FAD. Residues cysteine 136 and cysteine 139 are joined by a disulfide bond. NADP(+) is bound by residues histidine 176, arginine 182, and tyrosine 259. FAD-binding positions include aspartate 279 and 286–289 (RQAI). Arginine 286 is a binding site for NADP(+).

It belongs to the class-II pyridine nucleotide-disulfide oxidoreductase family. As to quaternary structure, homodimer. Requires FAD as cofactor.

It carries out the reaction [thioredoxin]-dithiol + NADP(+) = [thioredoxin]-disulfide + NADPH + H(+). Functionally, component of the thioredoxin-thioredoxin reductase system which may be involved in biosynthesis of penicillins and cephalosporins and may be important in determining the thiol-disulfide redox balance. The chain is Thioredoxin reductase from Streptomyces clavuligerus.